The primary structure comprises 123 residues: Small ribosomal subunit protein uS13 (123 aa).

Positions 97-123 (PVRGQRTKTNARTRKGPRKTVGVRRKK) are disordered.

Belongs to the universal ribosomal protein uS13 family. Part of the 30S ribosomal subunit. Forms a loose heterodimer with protein S19. Forms two bridges to the 50S subunit in the 70S ribosome.

In terms of biological role, located at the top of the head of the 30S subunit, it contacts several helices of the 16S rRNA. In the 70S ribosome it contacts the 23S rRNA (bridge B1a) and protein L5 of the 50S subunit (bridge B1b), connecting the 2 subunits; these bridges are implicated in subunit movement. Contacts the tRNAs in the A and P-sites. The protein is Small ribosomal subunit protein uS13 of Pelotomaculum thermopropionicum (strain DSM 13744 / JCM 10971 / SI).